A 138-amino-acid polypeptide reads, in one-letter code: Small ribosomal subunit protein uS11c (138 aa).

Positions 1-22 are disordered; it reads MAKPILRVGSRKNTRSASRKNV. Over residues 9–22 the composition is skewed to basic residues; the sequence is GSRKNTRSASRKNV.

Belongs to the universal ribosomal protein uS11 family. Part of the 30S ribosomal subunit.

It is found in the plastid. Its subcellular location is the chloroplast. The polypeptide is Small ribosomal subunit protein uS11c (Draba nemorosa (Woodland whitlowgrass)).